The sequence spans 844 residues: MAIEKLSPGMQQYVDIKKQYPDAFLLFRMGDFYELFYEDAVNAAQILEISLTSRNKNADNPIPMAGVPYHSAQQYIDVLIEQGYKVAIAEQMEDPKQAVGVVKREVVQVITPGTVVDSSKPDSQNNFLVAIDREGNQFGLAYMDLVTGDFYVTGLLDFTLVCGEIRNLKAREVVLGYDLSEEEEQILSRQMNLVLSYEKESFEDLHLLDLRLATVEQTASSKLLQYVHRTQMRELNHLKPVIRYEIKDFLQMDYATKASLDLVENARSGKKQGSLFWLLDETKTAMGMRLLRSWIHRPLIDKERIVQRQEVVQVFLDHFFERSDLTDSLKGVYDIERLASRVSFGKTNPKDLLQLATTLSSVPRIRAILEGMEQPTLAYLIAQLDAIPELESLISAAIAPEAPHVITDGGIIRTGFDETLDKYRCVLREGTSWIAEIEAKERENSGISTLKIDYNKKDGYYFHVTNSQLGNVPAHFFRKATLKNSERFGTEELARIEGDMLEAREKSANLEYEIFMRIREEVGKYIQRLQTLAQGIATVDVLQSLAVVAETQHLIRPEFGDDSQIDIRKGRHAVVEKVMGAQTYIPNTIQMAEDTSIQLVTGPNMSGKSTYMRQLAMTAVMAQLGSYVPAESAHLPIFDAIFTRIGAADDLVSGQSTFMVEMMEANNAISHATKNSLILFDELGRGTATYDGMALAQSIIEYIHEHIGAKTLFATHYHELTSLESSLQHLVNVHVATLEQDGQVTFLHKIEPGPADKSYGIHVAKIAGLPADLLARADKILTQLENQGTESPPPMRQTSAVTEQISLFDRAEEHPILAELAKLDVYNMTPMQVMNVLVELKQKL.

602–609 (GPNMSGKS) provides a ligand contact to ATP.

It belongs to the DNA mismatch repair MutS family.

In terms of biological role, this protein is involved in the repair of mismatches in DNA. It is possible that it carries out the mismatch recognition step. This protein has a weak ATPase activity. In Streptococcus pneumoniae (strain Hungary19A-6), this protein is DNA mismatch repair protein MutS.